A 355-amino-acid polypeptide reads, in one-letter code: Butyrate kinase 1 (355 aa).

The protein belongs to the acetokinase family.

It is found in the cytoplasm. It carries out the reaction butanoate + ATP = butanoyl phosphate + ADP. Its pathway is lipid metabolism; butanoate metabolism. Catalyzes the conversion of butyryl-CoA through butyryl phosphate to butyrate. The polypeptide is Butyrate kinase 1 (buk1) (Clostridium acetobutylicum (strain ATCC 824 / DSM 792 / JCM 1419 / IAM 19013 / LMG 5710 / NBRC 13948 / NRRL B-527 / VKM B-1787 / 2291 / W)).